A 431-amino-acid polypeptide reads, in one-letter code: Venom metalloproteinase 1 (431 aa).

The signal sequence occupies residues 1–22 (MDLFILTRFILFLSFFMKSIHC). Residues N64, N113, N148, and N187 are each glycosylated (N-linked (GlcNAc...) asparagine). In terms of domain architecture, Peptidase M12B spans 228–428 (DLLMKTSRRL…TSAACLKDTY (201 aa)). 2 cysteine pairs are disulfide-bonded: C340–C423 and C379–C407. A Zn(2+)-binding site is contributed by H363. Residue E364 is part of the active site. H367 and H373 together coordinate Zn(2+). A glycan (N-linked (GlcNAc...) asparagine) is linked at N414.

It in the C-terminal section; belongs to the venom metalloproteinase (M12B) family. In terms of assembly, monomer. Zn(2+) serves as cofactor. In terms of tissue distribution, expressed by the venom gland.

It localises to the secreted. The gelatinase activity is inhibited by EDTA. The recombinant protein has gelatinase activity. In vivo, injection of this recombinant into fifth instar L.oleracea (host) larvae results in partial insect mortality associated with the molt to sixth instar, with surviving insects showing retarded development and growth. This Eulophus pennicornis (Parasitoid wasp) protein is Venom metalloproteinase 1.